A 155-amino-acid polypeptide reads, in one-letter code: MANQDIYANLTQLGGKTELPNSPEEAVLEKVPNPQAGTDYAVRFTAPEFTSLCPLTAQPDFAHIVIDYVPGDWLVESKSLKLYLGSFRNHGAFHEDCSVSIGKRLVELLAPKWLRVGAYWYPRGGIPIDVFYQTGPELPGVWIPDQGVPTYRGRG.

Cys53 acts as the Thioimide intermediate in catalysis. Asp60 (proton donor) is an active-site residue. Residues 75-77 (VES) and 94-95 (HE) each bind substrate.

This sequence belongs to the GTP cyclohydrolase I family. QueF type 1 subfamily.

The protein localises to the cytoplasm. The enzyme catalyses 7-aminomethyl-7-carbaguanine + 2 NADP(+) = 7-cyano-7-deazaguanine + 2 NADPH + 3 H(+). It functions in the pathway tRNA modification; tRNA-queuosine biosynthesis. Functionally, catalyzes the NADPH-dependent reduction of 7-cyano-7-deazaguanine (preQ0) to 7-aminomethyl-7-deazaguanine (preQ1). This chain is NADPH-dependent 7-cyano-7-deazaguanine reductase, found in Ruegeria pomeroyi (strain ATCC 700808 / DSM 15171 / DSS-3) (Silicibacter pomeroyi).